We begin with the raw amino-acid sequence, 579 residues long: MMNLVLQYGLYILILVVLAIPLGNYIGKIMNGEKVFLSKILTPCENFIYKILHIDKDEDMSWKKYSFSVLAFSIISLIVLFLLHIFQGFLPLNPEKVSGTSWDLAFNNAISFVTNTNWQGYSGESSLSYFTQMMGLTVQNFVSAAVGISVLFALIRGFIRVKQKGIGNFWIDITRTVLYILIPLSIVVSLALVSQGVVQNFKQYETVSLLEPITLEDGTLVTEEVVPLGPAASQIAIKQLGTNGGGFMGTNSAHPIENPTILSNLFEMISLLLIPVALCFTFGRNIKDRRQGIAIFVAMGIMLVVAMAIVGVNEQIGTPQMALNGQVDLSTINQAGGNMEGKEARFGIATSSTWATFTTAASNGSVNSMHDSYTPIGGMIPMLLMQLGEVVFGGVGCGLYGMIGFAILAVFMAGLMVGRTPEYLGKKIEPFEMKMAVLVCLATPIAILIGSGIASILPETVNSLNNSGAHGFSEVLYAYTSAGGNNGSAFAGFAANTPFINISIGLSMIFARFVPMMGTLAIAGSMVKKKKVAESVGTLPTHNAMFIGLLIFVVLLIGALSFFPALALGPIAEFFQMLG.

A run of 10 helical transmembrane segments spans residues Met-2–Leu-22, Ser-66–Phe-86, Gly-135–Ile-155, Val-177–Val-197, Thr-260–Phe-280, Gly-292–Val-312, Val-391–Phe-411, Val-437–Leu-457, Phe-490–Phe-510, and Phe-546–Leu-566.

It belongs to the KdpA family. As to quaternary structure, the system is composed of three essential subunits: KdpA, KdpB and KdpC.

The protein resides in the cell membrane. Functionally, part of the high-affinity ATP-driven potassium transport (or Kdp) system, which catalyzes the hydrolysis of ATP coupled with the electrogenic transport of potassium into the cytoplasm. This subunit binds the extracellular potassium ions and delivers the ions to the membrane domain of KdpB through an intramembrane tunnel. In Clostridium botulinum (strain Eklund 17B / Type B), this protein is Potassium-transporting ATPase potassium-binding subunit.